The sequence spans 217 residues: Probable chemoreceptor glutamine deamidase CheD (217 aa).

A disordered region spans residues 194-217 (ATSGTAPSRGGELFTRASASRTPS).

This sequence belongs to the CheD family.

It carries out the reaction L-glutaminyl-[protein] + H2O = L-glutamyl-[protein] + NH4(+). Probably deamidates glutamine residues to glutamate on methyl-accepting chemotaxis receptors (MCPs), playing an important role in chemotaxis. The polypeptide is Probable chemoreceptor glutamine deamidase CheD (Cupriavidus pinatubonensis (strain JMP 134 / LMG 1197) (Cupriavidus necator (strain JMP 134))).